Reading from the N-terminus, the 229-residue chain is Leucyl/phenylalanyl-tRNA--protein transferase (229 aa).

Belongs to the L/F-transferase family.

Its subcellular location is the cytoplasm. The enzyme catalyses N-terminal L-lysyl-[protein] + L-leucyl-tRNA(Leu) = N-terminal L-leucyl-L-lysyl-[protein] + tRNA(Leu) + H(+). The catalysed reaction is N-terminal L-arginyl-[protein] + L-leucyl-tRNA(Leu) = N-terminal L-leucyl-L-arginyl-[protein] + tRNA(Leu) + H(+). It catalyses the reaction L-phenylalanyl-tRNA(Phe) + an N-terminal L-alpha-aminoacyl-[protein] = an N-terminal L-phenylalanyl-L-alpha-aminoacyl-[protein] + tRNA(Phe). In terms of biological role, functions in the N-end rule pathway of protein degradation where it conjugates Leu, Phe and, less efficiently, Met from aminoacyl-tRNAs to the N-termini of proteins containing an N-terminal arginine or lysine. This is Leucyl/phenylalanyl-tRNA--protein transferase from Pseudomonas syringae pv. tomato (strain ATCC BAA-871 / DC3000).